Reading from the N-terminus, the 173-residue chain is Alpha-crystallin B chain (173 aa).

Methionine 1 is modified (N-acetylmethionine). Residues 54-162 (RLPSWIESGL…PERSIPITRE (109 aa)) form the sHSP domain. Histidine 81, histidine 102, glutamate 104, and histidine 109 together coordinate Zn(2+).

This sequence belongs to the small heat shock protein (HSP20) family. In terms of assembly, heteromer composed of three CRYAA and one CRYAB subunits. Aggregates with homologous proteins, including the small heat shock protein HSPB1, to form large heteromeric complexes. Inter-subunit bridging via zinc ions enhances stability, which is crucial as there is no protein turn over in the lens.

Functionally, may contribute to the transparency and refractive index of the lens. This chain is Alpha-crystallin B chain (CRYAB), found in Aquarana catesbeiana (American bullfrog).